The sequence spans 212 residues: Mediator of RNA polymerase II transcription subunit 20 (212 aa).

Belongs to the Mediator complex subunit 20 family. Component of the Mediator complex, which is composed of MED1, MED4, MED6, MED7, MED8, MED9, MED10, MED11, MED12, MED13, MED13L, MED14, MED15, MED16, MED17, MED18, MED19, MED20, MED21, MED22, MED23, MED24, MED25, MED26, MED27, MED29, MED30, MED31, CCNC, CDK8 and CDC2L6/CDK11. The MED12, MED13, CCNC and CDK8 subunits form a distinct module termed the CDK8 module. Mediator containing the CDK8 module is less active than Mediator lacking this module in supporting transcriptional activation. Individual preparations of the Mediator complex lacking one or more distinct subunits have been variously termed ARC, CRSP, DRIP, PC2, SMCC and TRAP. Interacts with PPARG.

It localises to the nucleus. Functionally, component of the Mediator complex, a coactivator involved in the regulated transcription of nearly all RNA polymerase II-dependent genes. Mediator functions as a bridge to convey information from gene-specific regulatory proteins to the basal RNA polymerase II transcription machinery. Mediator is recruited to promoters by direct interactions with regulatory proteins and serves as a scaffold for the assembly of a functional preinitiation complex with RNA polymerase II and the general transcription factors. In Mus musculus (Mouse), this protein is Mediator of RNA polymerase II transcription subunit 20 (Med20).